The following is a 241-amino-acid chain: GPI-anchored hemophore RBT5 (241 aa).

Positions M1 to A20 are cleaved as a signal peptide. One can recognise a CFEM domain in the interval N26–A137. Intrachain disulfides connect C54-C94, C58-C89, C68-C75, and C77-C110. D72 lines the heme pocket. 2 stretches are compositionally biased toward low complexity: residues T140 to T154 and K163 to T182. The disordered stretch occupies residues T140–A210. Over residues S183 to E199 the composition is skewed to basic and acidic residues. Positions S200–A210 are enriched in low complexity. A lipid anchor (GPI-anchor amidated asparagine) is attached at N221. Residues A222–F241 constitute a propeptide, removed in mature form.

This sequence belongs to the RBT5 family. As to quaternary structure, interacts with PGA7. In terms of processing, the GPI-anchor is attached to the protein in the endoplasmic reticulum and serves to target the protein to the cell surface. There, the glucosamine-inositol phospholipid moiety is cleaved off and the GPI-modified mannoprotein is covalently attached via its lipidless GPI glycan remnant to the 1,6-beta-glucan of the outer cell wall layer. Mannosylated.

The protein localises to the secreted. It is found in the cell wall. It localises to the cell membrane. Functionally, GPI-linked hyphal surface heme-binding protein involved in heme-iron utilization. Heme transfer occurs between PGA7, RBT5 and CSA2 supporting a model in which the 3 CFEM proteins cooperate in a heme-acquisition system and form a cross-cell wall heme-transfer cascade. The ability to acquire iron from host tissues is a major virulence factor of pathogenic microorganisms. Required for biofilm formation. The polypeptide is GPI-anchored hemophore RBT5 (Candida albicans (strain SC5314 / ATCC MYA-2876) (Yeast)).